A 397-amino-acid chain; its full sequence is Elongation factor Tu (397 aa).

Residues 10–207 (KPHVNVGTIG…TLDAYIPEPE (198 aa)) enclose the tr-type G domain. The interval 19-26 (GHVDHGKT) is G1. GTP is bound at residue 19–26 (GHVDHGKT). Thr-26 is a Mg(2+) binding site. The interval 60-64 (GITIA) is G2. A G3 region spans residues 81–84 (DCPG). Residues 81–85 (DCPGH) and 136–139 (NKAD) contribute to the GTP site. Residues 136–139 (NKAD) form a G4 region. Residues 174-176 (SAL) are G5.

Belongs to the TRAFAC class translation factor GTPase superfamily. Classic translation factor GTPase family. EF-Tu/EF-1A subfamily. Monomer.

It localises to the cytoplasm. It carries out the reaction GTP + H2O = GDP + phosphate + H(+). In terms of biological role, GTP hydrolase that promotes the GTP-dependent binding of aminoacyl-tRNA to the A-site of ribosomes during protein biosynthesis. The sequence is that of Elongation factor Tu from Hahella chejuensis (strain KCTC 2396).